The following is a 59-amino-acid chain: Putative potassium channel toxin Ts22 (59 aa).

The N-terminal stretch at M1–Q22 is a signal peptide. 3 cysteine pairs are disulfide-bonded: C29–C50, C35–C55, and C39–C57.

Belongs to the short scorpion toxin superfamily. Potassium channel inhibitor family. Alpha-KTx 04 subfamily. In terms of tissue distribution, expressed by the venom gland.

It is found in the secreted. Potently blocks voltage-gated potassium channels (Kv). The chain is Putative potassium channel toxin Ts22 from Tityus serrulatus (Brazilian scorpion).